Reading from the N-terminus, the 121-residue chain is Spindle and kinetochore-associated protein 2 (121 aa).

A Phosphoserine modification is found at serine 101.

Belongs to the SKA2 family. As to quaternary structure, component of the SKA1 complex, composed of SKA1, SKA2 and SKA3. Forms a heterodimer with SKA1; the heterodimer interacting with SKA3. The core SKA1 complex is composed of 2 SKA1-SKA2 heterodimers, each heterodimer interacting with a molecule of the SKA3 homodimer. The core SKA1 complex associates with microtubules and forms oligomeric assemblies. Interacts directly with SKA1. Binds directly to microtubules; but with a much lower affinity than SKA1. May interact with NR3C1; the relevance of such interaction remains unclear in vivo.

The protein resides in the cytoplasm. It localises to the cytoskeleton. It is found in the spindle. The protein localises to the chromosome. Its subcellular location is the centromere. The protein resides in the kinetochore. Functionally, component of the SKA1 complex, a microtubule-binding subcomplex of the outer kinetochore that is essential for proper chromosome segregation. Required for timely anaphase onset during mitosis, when chromosomes undergo bipolar attachment on spindle microtubules leading to silencing of the spindle checkpoint. The SKA1 complex is a direct component of the kinetochore-microtubule interface and directly associates with microtubules as oligomeric assemblies. The complex facilitates the processive movement of microspheres along a microtubule in a depolymerization-coupled manner. In the complex, it is required for SKA1 localization. Affinity for microtubules is synergistically enhanced in the presence of the ndc-80 complex and may allow the ndc-80 complex to track depolymerizing microtubules. This Homo sapiens (Human) protein is Spindle and kinetochore-associated protein 2 (SKA2).